Consider the following 68-residue polypeptide: Protein VNG_1110C (68 aa).

The polypeptide is Protein VNG_1110C (Halobacterium salinarum (strain ATCC 700922 / JCM 11081 / NRC-1) (Halobacterium halobium)).